Here is a 90-residue protein sequence, read N- to C-terminus: DNA-directed RNA polymerase subunit Rpo11 (90 aa).

The protein belongs to the archaeal Rpo11/eukaryotic RPB11/RPC19 RNA polymerase subunit family. Part of the 13-subunit RNA polymerase complex.

It is found in the cytoplasm. It carries out the reaction RNA(n) + a ribonucleoside 5'-triphosphate = RNA(n+1) + diphosphate. In terms of biological role, DNA-dependent RNA polymerase (RNAP) catalyzes the transcription of DNA into RNA using the four ribonucleoside triphosphates as substrates. The chain is DNA-directed RNA polymerase subunit Rpo11 from Sulfolobus acidocaldarius (strain ATCC 33909 / DSM 639 / JCM 8929 / NBRC 15157 / NCIMB 11770).